Here is a 926-residue protein sequence, read N- to C-terminus: Coatomer subunit beta'-2 (926 aa).

WD repeat units follow at residues 13–52, 55–94, 97–136, 140–180, 183–224, 227–266, 269–309, 351–390, and 461–501; these read QRSE…MAKS, VTEL…KVKV, AHSD…ACTQ, GHSH…PNFT, AHQK…CVQT, GHTH…LENT, YGLE…ASMD, TCDL…RSFG, and RIDV…SHFD. The interval 847–926 is disordered; that stretch reads EEESLENGDM…GTNNEGNPSA (80 aa). Positions 868-887 are enriched in basic and acidic residues; that stretch reads NEQRNEDDVAEHVEEHHEEK. Positions 888–900 are enriched in acidic residues; that stretch reads EAEEEEGIVDGDS. Over residues 917-926 the composition is skewed to polar residues; that stretch reads GTNNEGNPSA.

The protein belongs to the WD repeat COPB2 family. Oligomeric complex that consists of at least the alpha, beta, beta', gamma, delta, epsilon and zeta subunits.

It localises to the cytoplasm. The protein resides in the golgi apparatus membrane. Its subcellular location is the cytoplasmic vesicle. It is found in the COPI-coated vesicle membrane. The coatomer is a cytosolic protein complex that binds to dilysine motifs and reversibly associates with Golgi non-clathrin-coated vesicles, which further mediate biosynthetic protein transport from the ER, via the Golgi up to the trans Golgi network. Coatomer complex is required for budding from Golgi membranes, and is essential for the retrograde Golgi-to-ER transport of dilysine-tagged proteins. The sequence is that of Coatomer subunit beta'-2 from Arabidopsis thaliana (Mouse-ear cress).